The chain runs to 278 residues: Indole-3-glycerol phosphate synthase (278 aa).

It belongs to the TrpC family.

It carries out the reaction 1-(2-carboxyphenylamino)-1-deoxy-D-ribulose 5-phosphate + H(+) = (1S,2R)-1-C-(indol-3-yl)glycerol 3-phosphate + CO2 + H2O. The protein operates within amino-acid biosynthesis; L-tryptophan biosynthesis; L-tryptophan from chorismate: step 4/5. In Stutzerimonas stutzeri (strain A1501) (Pseudomonas stutzeri), this protein is Indole-3-glycerol phosphate synthase.